Consider the following 377-residue polypeptide: 23S rRNA (uracil(747)-C(5))-methyltransferase RlmC (377 aa).

Residues Cys-3, Cys-11, Cys-14, and Cys-87 each coordinate [4Fe-4S] cluster. Gln-212, Phe-241, Glu-262, and Asn-307 together coordinate S-adenosyl-L-methionine. The active-site Nucleophile is Cys-334.

Belongs to the class I-like SAM-binding methyltransferase superfamily. RNA M5U methyltransferase family. RlmC subfamily.

It catalyses the reaction uridine(747) in 23S rRNA + S-adenosyl-L-methionine = 5-methyluridine(747) in 23S rRNA + S-adenosyl-L-homocysteine + H(+). Functionally, catalyzes the formation of 5-methyl-uridine at position 747 (m5U747) in 23S rRNA. In Proteus mirabilis (strain HI4320), this protein is 23S rRNA (uracil(747)-C(5))-methyltransferase RlmC.